We begin with the raw amino-acid sequence, 159 residues long: Lipoprotein LpqH (159 aa).

An N-terminal signal peptide occupies residues 1 to 21; the sequence is MKRGLTVAVAGAAILVAGLSG. Cys22 carries the N-palmitoyl cysteine lipid modification. Residue Cys22 is the site of S-diacylglycerol cysteine attachment. The tract at residues 24-51 is disordered; that stretch reads SNKSTTGSGETTTAAGTTASPGAASGPK. Residues 27-49 show a composition bias toward low complexity; the sequence is STTGSGETTTAAGTTASPGAASG.

It belongs to the mycobacterial 19 kDa antigen family. Post-translationally, modified by Lgt on Cys-22 with an S-linked diacylglycerol with a mixture of C16, C18 and C19 fatty acids, signal peptide is removed by LspA, modifed by Lnt with an amide-linked mixture of C16 and C19 fatty acids.

It localises to the cell membrane. Might be involved in ligand transport. A host TLR2 agonist, modifies host gene expression in response to pathogen. This Mycobacterium tuberculosis (strain CDC 1551 / Oshkosh) protein is Lipoprotein LpqH (lpqH).